Reading from the N-terminus, the 366-residue chain is MKIADLMTLLDHHVPFSTAESWDNVGLLIGDEDVEVTGVLTALDCTLEVVNEAIEKGYNTIISHHPLIFKGVTSLKANGYGLIIRKLIQHDINLIAMHTNLDVNPYGVNMMLAKAMGLKNISIINNQQDVYYKVQTYIPKDNVGPFKDKLSENGLAQEGNYEYCFFESEGRGQFKPVGEANPTIGQIDKIEYVDEVKIEFMIDAYQKSRAEQLIKQYHPYETPVFDFIEIKQTSLYGLGVMAEVDNQMTLEDFAADIKSKLNIPSVRFVGESNQKIKRIAIIGGSGIGYEYQAVQQGADVFVTGDIKHHDALDAKIHGVNLIDINHYSEYVMKEGLKALLMNWFNTEKINLDVEASTINTDPFQYI.

The Zn(2+) site is built by His-64, His-65, Asp-102, His-326, and Glu-329.

The protein belongs to the GTP cyclohydrolase I type 2/NIF3 family. In terms of assembly, homohexamer.

This chain is GTP cyclohydrolase 1 type 2 homolog, found in Staphylococcus aureus (strain COL).